The following is a 107-amino-acid chain: RNA polymerase II transcriptional coactivator KIWI (107 aa).

A disordered region spans residues 1-40; it reads MSSRGKRKDEDVRASDDESETHAPAKKVAKPADDSDQSDD. Residues 7-23 are compositionally biased toward basic and acidic residues; it reads RKDEDVRASDDESETHA.

Belongs to the transcriptional coactivator PC4 family.

It localises to the nucleus. Functionally, general coactivator that functions cooperatively with TAFs and mediates functional interactions between upstream activators and the general transcriptional machinery. Binds single-stranded DNA. This chain is RNA polymerase II transcriptional coactivator KIWI (KIWI), found in Arabidopsis thaliana (Mouse-ear cress).